The primary structure comprises 557 residues: Copine-7 (557 aa).

2 C2 domains span residues 1-128 (MSGD…TRPL) and 135-263 (NAGK…AQWD). Ca(2+) is bound by residues D168, D174, D230, D232, and D238. In terms of domain architecture, VWFA spans 306–505 (HCTVAIDFTA…PALRDIVQFV (200 aa)).

This sequence belongs to the copine family. Requires Ca(2+) as cofactor.

The protein localises to the cytoplasm. It localises to the nucleus. Its subcellular location is the cell membrane. In terms of biological role, calcium-dependent phospholipid-binding protein that may play a role in calcium-mediated intracellular processes. The sequence is that of Copine-7 from Mus musculus (Mouse).